Here is a 259-residue protein sequence, read N- to C-terminus: GEM-like protein 1 (259 aa).

A compositionally biased stretch (basic and acidic residues) spans 1-11 (MSGQENHDHGR). Residues 1–79 (MSGQENHDHG…PSPAPRNTMD (79 aa)) are disordered. The segment covering 13–30 (SSTPAAASEPSKAAAHSS) has biased composition (low complexity). Residues 138-215 (KVFKQTFDCL…NQLKAVNPST (78 aa)) form the GRAM domain.

This sequence belongs to the GEM family. Interacts with AFH1.

In Arabidopsis thaliana (Mouse-ear cress), this protein is GEM-like protein 1 (FIP1).